A 427-amino-acid chain; its full sequence is Acetyl-CoA acetyltransferase, mitochondrial (427 aa).

The transit peptide at 1-33 (MAVLAALLRSGARSRSPLLRRLVQEIRYVERSY) directs the protein to the mitochondrion. An N6-acetyllysine; alternate modification is found at Lys-66. Lys-66 bears the N6-succinyllysine; alternate mark. N6-succinyllysine is present on Lys-78. The Acyl-thioester intermediate role is filled by Cys-126. N6-acetyllysine; alternate occurs at positions 174, 181, 190, and 202. 4 positions are modified to N6-succinyllysine; alternate: Lys-174, Lys-181, Lys-190, and Lys-202. Tyr-219 lines the CoA pocket. Tyr-219 serves as a coordination point for K(+). Residues Lys-223 and Lys-230 each carry the N6-acetyllysine; alternate modification. N6-succinyllysine; alternate occurs at positions 223 and 230. Lys-243 is modified (N6-succinyllysine). Lys-251 and Lys-257 each carry N6-acetyllysine. CoA contacts are provided by residues 258–260 (RVD) and Lys-263. An N6-acetyllysine; alternate modification is found at Lys-263. Lys-263 is modified (N6-succinyllysine; alternate). Lys-266 and Lys-268 each carry N6-succinyllysine. Lys-273 is subject to N6-acetyllysine. Residues Ala-280, Ala-281, and Ala-283 each coordinate K(+). Position 284 (Ser-284) interacts with CoA. An N6-acetyllysine modification is found at Lys-338. Val-381 serves as a coordination point for K(+). Residue Cys-413 is the Proton donor/acceptor of the active site.

This sequence belongs to the thiolase-like superfamily. Thiolase family. In terms of assembly, homotetramer. Post-translationally, succinylation at Lys-268, adjacent to a coenzyme A binding site. Desuccinylated by SIRT5.

It localises to the mitochondrion. It carries out the reaction 2 acetyl-CoA = acetoacetyl-CoA + CoA. It catalyses the reaction propanoyl-CoA + acetyl-CoA = 2-methyl-3-oxobutanoyl-CoA + CoA. It participates in lipid metabolism; fatty acid beta-oxidation. Activated by potassium ions, but not sodium ions. Functionally, this is one of the enzymes that catalyzes the last step of the mitochondrial beta-oxidation pathway, an aerobic process breaking down fatty acids into acetyl-CoA. Using free coenzyme A/CoA, catalyzes the thiolytic cleavage of medium- to long-chain 3-oxoacyl-CoAs into acetyl-CoA and a fatty acyl-CoA shortened by two carbon atoms. The activity of the enzyme is reversible and it can also catalyze the condensation of two acetyl-CoA molecules into acetoacetyl-CoA. Thereby, it plays a major role in ketone body metabolism. In Homo sapiens (Human), this protein is Acetyl-CoA acetyltransferase, mitochondrial (ACAT1).